The sequence spans 457 residues: Multidrug resistance protein MdtK (457 aa).

The next 12 helical transmembrane spans lie at 11–31 (LLAL…MGFV), 53–73 (IWLP…PVIA), 93–113 (WLAG…GYII), 127–147 (AVGY…FQVA), 160–180 (GMVI…IFIY), 188–208 (LGGV…FIAM), 243–263 (LPIA…ALLV), 276–296 (IALN…AAVT), 314–334 (AART…IFTV), 357–377 (LMLL…GSGI), 387–407 (IFFI…YILA), and 418–438 (PAGF…MMML).

This sequence belongs to the multi antimicrobial extrusion (MATE) (TC 2.A.66.1) family. MdtK subfamily.

Its subcellular location is the cell inner membrane. Its function is as follows. Multidrug efflux pump that functions probably as a Na(+)/drug antiporter. In Citrobacter koseri (strain ATCC BAA-895 / CDC 4225-83 / SGSC4696), this protein is Multidrug resistance protein MdtK.